The sequence spans 293 residues: Pantothenate synthetase (293 aa).

Position 30-37 (30-37 (MGYLHKGH)) interacts with ATP. H37 (proton donor) is an active-site residue. Q61 is a (R)-pantoate binding site. Beta-alanine is bound at residue Q61. ATP is bound at residue 147–150 (GEKD). Q153 is a binding site for (R)-pantoate. Residues V176 and 184–187 (CSSR) contribute to the ATP site.

It belongs to the pantothenate synthetase family. Homodimer.

Its subcellular location is the cytoplasm. The enzyme catalyses (R)-pantoate + beta-alanine + ATP = (R)-pantothenate + AMP + diphosphate + H(+). It functions in the pathway cofactor biosynthesis; (R)-pantothenate biosynthesis; (R)-pantothenate from (R)-pantoate and beta-alanine: step 1/1. Its function is as follows. Catalyzes the condensation of pantoate with beta-alanine in an ATP-dependent reaction via a pantoyl-adenylate intermediate. This Brucella abortus (strain S19) protein is Pantothenate synthetase.